The chain runs to 407 residues: Transmembrane protein 184B (407 aa).

Residues 1 to 25 (MTVRGDVLAPDPASPTTAAASPSVS) are disordered. Residues 9-25 (APDPASPTTAAASPSVS) are compositionally biased toward low complexity. 7 consecutive transmembrane segments (helical) span residues 40 to 60 (FLMTTAAQAISGFFVWTALLI), 84 to 104 (ILFIVPIYAFDSWLSLLFFTN), 121 to 141 (LVIYNFLSLCYEYLGGESSIM), 178 to 198 (LQFCVVKPLMAVSTVVLQAFG), 214 to 234 (VTIIYNISVSLALYALFLFYF), 249 to 269 (FFMVKSVIFLSFWQGMLLAIL), and 290 to 310 (VAAGYQDFIICVEMFFAALAL). Residues 369 to 395 (TLEPGPTWRGGAHGLSRSHSLSGARDN) form a disordered region. Residues Ser388, Ser402, and Ser403 each carry the phosphoserine modification.

Belongs to the TMEM184 family.

It is found in the membrane. Functionally, may activate the MAP kinase signaling pathway. This chain is Transmembrane protein 184B (TMEM184B), found in Homo sapiens (Human).